The following is a 479-amino-acid chain: MALSKNTKLVILMAIPLITFLLPAPDGLSLIAWRLLGVYIATIVGLVLKPYGEPVILLAAIAVSGVIIGNTEGAKELVKVGNMLDGYKSGTTWLIFTAFTLSSAFVITGLGKRIAYHMIGAMGSTTLRLGYVTMFLDLLLSPATPSNTARSGGIIFPIINSVVVALGSDPEKSPKKAGRYLMMNVYMVVKTTSYIFLTAMAPNALALSLMAPILGFETTWIKWFLAASVPGLLCLFLIPLICYWVSPPELKKVDNKAIAKKGLEELGPMSFREKALSVLFVIALFGWIFSNSLHINATIVAIIVMVLCIVLSIVTWDDILKSKGAWNTLVWYGGIIGMSGLLEKSGFFKWLANTLSTILQFEGHGMMALIVILTLSVSVRYLFASGGAYVAAMVPVFATVGHVTGAPTELLALGLVFANSYGGSVTHYGGGPGPIAFGAGYNDIKSWWITGAIIAFGSLIIHLTIGMAWWKLLMSLGWL.

Helical transmembrane passes span 11 to 31 (ILMA…LSLI), 43 to 63 (IVGL…AIAV), 90 to 110 (GTTW…ITGL), 151 to 171 (SGGI…SDPE), 195 to 215 (IFLT…PILG), 223 to 243 (WFLA…LICY), 274 to 294 (KALS…NSLH), 295 to 315 (INAT…SIVT), 328 to 348 (TLVW…SGFF), and 447 to 467 (WWIT…TIGM).

Belongs to the SLC13A/DASS transporter (TC 2.A.47) family. DIT1 subfamily.

The protein localises to the cell inner membrane. This is an uncharacterized protein from Haemophilus influenzae (strain ATCC 51907 / DSM 11121 / KW20 / Rd).